Consider the following 442-residue polypeptide: MKLELGNFYVEEIVFGEKTSFKDGVLTINKQEALDYVMEDENITHAELHIVKPGDMVRLCPVKEAIEPRIKLDGRTYFPGVTDEELTRCGEGRTHALKGCSVLVVGKHWGGFQDGLIDMGGEGAKYTYYSTLKNIVLVGDTNEDFEKNEQQKKNKALRWAGHKLAEYIGKTVKDMEPQEVETYELEPVTQRSEEVTKLPGVVFVMQPQSQMEELGYNDMVYGWDMNRMVPTYMHPNEVLDGAIISGSFMPCSSKWSTYDFQNFPALKRLYAEHGKTVNFLGVIMSNLNVALQQKQRSALFVAQMAKSLGAQGAIVAEEGYGNPDADFIACIVALENEGIKTVGLTNECTGRDGFSQPLVTLDEKANAIVSCGNVSELVELPPMPVVLGELEALARDGLSGGWAGDEILGSSVKADGSVIMENNAMFCGDQVVGWSTKTMKEF.

Heterotetramer of two alpha and two beta subunits. Component of the betaine reductase complex, together with components A and C. PB is substrate specific.

It carries out the reaction acetyl phosphate + trimethylamine + [thioredoxin]-disulfide + H2O = glycine betaine + [thioredoxin]-dithiol + phosphate + H(+). In terms of biological role, in the first step of betaine reductase, the substrate is bound to component PB via a Schiff base intermediate. Then the PB-activated substrate is nucleophilically attacked by the selenol anion of component PA to transform it to a carboxymethylated selenoether and the respective amine. By action of component PC, acetyl phosphate is formed, leaving component PA in its oxidized state. Finally component PA becomes reduced by the thioredoxin system to start a new catalytic cycle of reductive deamination. The sequence is that of Betaine reductase complex component B subunit alpha (grdI) from Peptoclostridium acidaminophilum (Eubacterium acidaminophilum).